Here is a 110-residue protein sequence, read N- to C-terminus: UPF0122 protein BCAH187_A3894 (110 aa).

The protein belongs to the UPF0122 family.

Its function is as follows. Might take part in the signal recognition particle (SRP) pathway. This is inferred from the conservation of its genetic proximity to ftsY/ffh. May be a regulatory protein. The polypeptide is UPF0122 protein BCAH187_A3894 (Bacillus cereus (strain AH187)).